The following is a 133-amino-acid chain: Profilin-1 (133 aa).

A disulfide bridge links Cys-95 with Cys-117.

Belongs to the profilin family. As to quaternary structure, dimer and tetramer. Occurs in many kinds of cells as a complex with monomeric actin in a 1:1 ratio.

The protein localises to the cytoplasm. It is found in the cytoskeleton. Functionally, binds to actin and affects the structure of the cytoskeleton. At high concentrations, profilin prevents the polymerization of actin, whereas it enhances it at low concentrations. By binding to PIP2, it inhibits the formation of IP3 and DG. Possesses high binding affinity for poly(L-proline). The protein is Profilin-1 of Artemisia vulgaris (Mugwort).